Here is a 319-residue protein sequence, read N- to C-terminus: Alpha-hemolysin (319 aa).

Residues 1 to 26 (MKTRIVSSVTTTLLLGSILMNPVAGA) form the signal peptide.

It belongs to the aerolysin family. In terms of assembly, self-assembles to first form a non-lytic oligomeric intermediate, and then, a mushroom-shaped homoheptamer structure of 100 Angstroms in length and up to 100 Angstroms in diameter. Interacts with human ADAM10; this interaction is required for toxin pore formation, disruption of focal adhesions, and hly-mediated cytotoxicity.

The protein localises to the secreted. Functionally, alpha-toxin binds to the membrane of eukaryotic cells (particularly red blood cells, RBC) forming pores, resulting in hemolysis, with the release of low-molecular weight molecules leading to eventual osmotic RBC lysis. Human RBCs bind much less alpha-toxin than do rabbit RBCs. Heptamer oligomerization and pore formation is required for lytic activity. The sequence is that of Alpha-hemolysin (hly) from Staphylococcus aureus.